Reading from the N-terminus, the 200-residue chain is THO complex subunit tho5 (200 aa).

The protein belongs to the THOC5 family. Component of the THO and TREX complexes.

The protein localises to the cytoplasm. It is found in the nucleus. Component the THO subcomplex of the TREX complex, which operates in coupling transcription elongation to mRNA export. The THO complex is recruited to transcribed genes and moves along the gene with the elongating polymerase during transcription. THO is important for stabilizing nascent RNA in the RNA polymerase II elongation complex by preventing formation of DNA:RNA hybrids behind the elongating polymerase. The THO complex is also required to maintain TRAMP complex occupancy at sites of snoRNA transcription thus promoting exosome-mediated degradation of snoRNA precursors. The protein is THO complex subunit tho5 of Schizosaccharomyces pombe (strain 972 / ATCC 24843) (Fission yeast).